We begin with the raw amino-acid sequence, 201 residues long: Adenylyl-sulfate kinase (201 aa).

Position 35–42 (35–42 (GLSGSGKS)) interacts with ATP. Residue S109 is the Phosphoserine intermediate of the active site.

Belongs to the APS kinase family.

The catalysed reaction is adenosine 5'-phosphosulfate + ATP = 3'-phosphoadenylyl sulfate + ADP + H(+). Its pathway is sulfur metabolism; hydrogen sulfide biosynthesis; sulfite from sulfate: step 2/3. Its function is as follows. Catalyzes the synthesis of activated sulfate. In Escherichia coli (strain ATCC 8739 / DSM 1576 / NBRC 3972 / NCIMB 8545 / WDCM 00012 / Crooks), this protein is Adenylyl-sulfate kinase.